An 89-amino-acid chain; its full sequence is Putative ankyrin repeat protein RF_1157 (89 aa).

The stretch at 2–32 is one ANK repeat; that stretch reads YNTTPLNFAINQENNEEVIKYLLANGANPRL.

This Rickettsia felis (strain ATCC VR-1525 / URRWXCal2) (Rickettsia azadi) protein is Putative ankyrin repeat protein RF_1157.